The following is a 358-amino-acid chain: S-adenosylmethionine:tRNA ribosyltransferase-isomerase (358 aa).

The protein belongs to the QueA family. In terms of assembly, monomer.

Its subcellular location is the cytoplasm. The enzyme catalyses 7-aminomethyl-7-carbaguanosine(34) in tRNA + S-adenosyl-L-methionine = epoxyqueuosine(34) in tRNA + adenine + L-methionine + 2 H(+). Its pathway is tRNA modification; tRNA-queuosine biosynthesis. Its function is as follows. Transfers and isomerizes the ribose moiety from AdoMet to the 7-aminomethyl group of 7-deazaguanine (preQ1-tRNA) to give epoxyqueuosine (oQ-tRNA). This chain is S-adenosylmethionine:tRNA ribosyltransferase-isomerase, found in Chelativorans sp. (strain BNC1).